Consider the following 54-residue polypeptide: Rubredoxin (54 aa).

At Met1 the chain carries N-formylmethionine. One can recognise a Rubredoxin-like domain in the interval 1-54; the sequence is MKKYTCTVCGYIYNPEDGDPDNGVNPGTDFKDIPDDWVCPLCGVGKDQFEEVEE. Residues Cys6, Cys9, Cys39, and Cys42 each coordinate Fe cation.

This sequence belongs to the rubredoxin family. It depends on Fe(3+) as a cofactor.

Functionally, rubredoxin is a small nonheme, iron protein lacking acid-labile sulfide. Its single Fe, chelated to 4 Cys, functions as an electron acceptor and may also stabilize the conformation of the molecule. This Clostridium pasteurianum protein is Rubredoxin.